A 142-amino-acid chain; its full sequence is MAQKAVEKSEEEWKKVLTPEQYHVLRQKGTERPFSGNLYYNKEKGVYTCAACGQELFSSDTKFESGTGWPSFYDVISSDRVRLKEDTSYFMNRIEVVCSRCGSHLGHVFEDGPAPTGKRYCINSVSLNFKTEEEGKQGEERM.

The MsrB domain occupies 10–132 (EEEWKKVLTP…NSVSLNFKTE (123 aa)). Positions 49, 52, 98, and 101 each coordinate Zn(2+). The active-site Nucleophile is the Cys-121.

This sequence belongs to the MsrB Met sulfoxide reductase family. Zn(2+) serves as cofactor.

The catalysed reaction is L-methionyl-[protein] + [thioredoxin]-disulfide + H2O = L-methionyl-(R)-S-oxide-[protein] + [thioredoxin]-dithiol. The sequence is that of Peptide methionine sulfoxide reductase MsrB from Methanosarcina barkeri (strain Fusaro / DSM 804).